The chain runs to 218 residues: Acetoacetyl-CoA:acetate/butyrate CoA transferase alpha subunit (218 aa).

24-30 contributes to the CoA binding site; it reads GGFLNCG.

The protein belongs to the 3-oxoacid CoA-transferase subunit A family. In terms of assembly, heterotetramer composed of two alpha subunits (CtfA) and two beta subunits (CtfB).

It carries out the reaction acetoacetate + butanoyl-CoA = acetoacetyl-CoA + butanoate. It catalyses the reaction acetoacetate + acetyl-CoA = acetoacetyl-CoA + acetate. Its activity is regulated as follows. The acetate and butyrate conversion reactions are inhibited in vitro by physiological levels of acetone and butanol. In terms of biological role, catalyzes the transfer of CoA from acetoacetyl-CoA to acetate, butyrate and propionate. Also shows low activity with valerate, isobutyrate and crotonate. Plays an important role in the metabolic shift between the acid-producing and solvent-forming states of C.acetobutylicum. Acts mainly to detoxify the medium by removing the acetate and butyrate excreted earlier in the fermentation. In Clostridium acetobutylicum (strain ATCC 824 / DSM 792 / JCM 1419 / IAM 19013 / LMG 5710 / NBRC 13948 / NRRL B-527 / VKM B-1787 / 2291 / W), this protein is Acetoacetyl-CoA:acetate/butyrate CoA transferase alpha subunit.